A 595-amino-acid chain; its full sequence is TNF receptor-associated factor family protein DDB_G0272348 (595 aa).

The disordered stretch occupies residues 14 to 64; the sequence is SFTNNNSNNNNNNNNNSNSNNNNNNNNNNINNNNNHNNNNKNNSNNKNEIN. Over residues 17-64 the composition is skewed to low complexity; that stretch reads NNNSNNNNNNNNNSNSNNNNNNNNNNINNNNNHNNNNKNNSNNKNEIN. An RING-type; degenerate zinc finger spans residues 87–134; the sequence is CTICSDLLVNSFHADKFKAVQCKNGHYTTCLNCWEKHLEKKKNCIQCG. TRAF-type zinc fingers lie at residues 189 to 253 and 254 to 311; these read EHLK…INKE and SHNA…SKLS. The stretch at 348–410 forms a coiled coil; sequence LLNGQNKKIT…QQQQSQQQQQ (63 aa). The span at 409–440 shows a compositional bias: low complexity; it reads QQSQQQQQSQQSQQNNNSNSHFINNNNNNINN. Residues 409 to 450 are disordered; that stretch reads QQSQQQQQSQQSQQNNNSNSHFINNNNNNINNVQMSDSPNGG. A compositionally biased stretch (polar residues) spans 441-450; sequence VQMSDSPNGG. The region spanning 456 to 584 is the MATH domain; sequence VYKNKWVISN…NDSITIEIEI (129 aa).

It belongs to the TNF receptor-associated factor family. A subfamily.

It localises to the cytoplasm. Its function is as follows. Probable adapter protein and signal transducer that links members of the tumor necrosis factor receptor family to different signaling pathways by association with the receptor cytoplasmic domain and kinases. This chain is TNF receptor-associated factor family protein DDB_G0272348, found in Dictyostelium discoideum (Social amoeba).